We begin with the raw amino-acid sequence, 554 residues long: Glucose-6-phosphate isomerase (554 aa).

Glu-359 functions as the Proton donor in the catalytic mechanism. Catalysis depends on residues His-390 and Lys-518.

The protein belongs to the GPI family.

The protein localises to the cytoplasm. It carries out the reaction alpha-D-glucose 6-phosphate = beta-D-fructose 6-phosphate. The protein operates within carbohydrate biosynthesis; gluconeogenesis. Its pathway is carbohydrate degradation; glycolysis; D-glyceraldehyde 3-phosphate and glycerone phosphate from D-glucose: step 2/4. Its function is as follows. Catalyzes the reversible isomerization of glucose-6-phosphate to fructose-6-phosphate. The sequence is that of Glucose-6-phosphate isomerase from Pseudomonas putida (strain GB-1).